We begin with the raw amino-acid sequence, 73 residues long: MWFCIDLGADAFKEAGVLAEKKNRRVLQHILGLNIFKRELIPPCKDPDPYQIQILLKNYILKNVSTVFTYYCQ.

It belongs to the asfivirus DP63R family.

This is an uncharacterized protein from Ornithodoros (relapsing fever ticks).